A 119-amino-acid polypeptide reads, in one-letter code: MARVKSGKITHARHKKVLDAAKGYYGNRSRNFRTATQAVDKANQYATRDRKTRKRNFRALWIQRINAAVRAVDAEMTYSRFIAALAKAGIEVDRKVLADLAVHEPEAFAAVVAQAKAAA.

The protein belongs to the bacterial ribosomal protein bL20 family.

Its function is as follows. Binds directly to 23S ribosomal RNA and is necessary for the in vitro assembly process of the 50S ribosomal subunit. It is not involved in the protein synthesizing functions of that subunit. The polypeptide is Large ribosomal subunit protein bL20 (Paracoccus denitrificans (strain Pd 1222)).